Reading from the N-terminus, the 242-residue chain is Type III pantothenate kinase (242 aa).

7 to 14 (DLGNSRFK) lines the ATP pocket. Residues tyrosine 91 and 98 to 101 (GVDR) contribute to the substrate site. The active-site Proton acceptor is the aspartate 100. Threonine 121 is an ATP binding site. Threonine 171 is a binding site for substrate.

It belongs to the type III pantothenate kinase family. In terms of assembly, homodimer. NH4(+) serves as cofactor. It depends on K(+) as a cofactor.

It is found in the cytoplasm. It carries out the reaction (R)-pantothenate + ATP = (R)-4'-phosphopantothenate + ADP + H(+). It participates in cofactor biosynthesis; coenzyme A biosynthesis; CoA from (R)-pantothenate: step 1/5. In terms of biological role, catalyzes the phosphorylation of pantothenate (Pan), the first step in CoA biosynthesis. In Xanthomonas oryzae pv. oryzae (strain MAFF 311018), this protein is Type III pantothenate kinase.